The following is a 290-amino-acid chain: Shikimate dehydrogenase (NADP(+)) (290 aa).

Shikimate contacts are provided by residues 20-22 (SLS) and threonine 67. Lysine 71 functions as the Proton acceptor in the catalytic mechanism. The shikimate site is built by asparagine 92 and aspartate 107. NADP(+) is bound by residues 132 to 136 (GAGGA) and methionine 228. Tyrosine 230 contributes to the shikimate binding site. NADP(+) is bound at residue glycine 251.

The protein belongs to the shikimate dehydrogenase family. As to quaternary structure, homodimer.

It catalyses the reaction shikimate + NADP(+) = 3-dehydroshikimate + NADPH + H(+). The protein operates within metabolic intermediate biosynthesis; chorismate biosynthesis; chorismate from D-erythrose 4-phosphate and phosphoenolpyruvate: step 4/7. Its function is as follows. Involved in the biosynthesis of the chorismate, which leads to the biosynthesis of aromatic amino acids. Catalyzes the reversible NADPH linked reduction of 3-dehydroshikimate (DHSA) to yield shikimate (SA). This chain is Shikimate dehydrogenase (NADP(+)), found in Citrifermentans bemidjiense (strain ATCC BAA-1014 / DSM 16622 / JCM 12645 / Bem) (Geobacter bemidjiensis).